We begin with the raw amino-acid sequence, 261 residues long: Indole-3-glycerol phosphate synthase (261 aa).

It belongs to the TrpC family.

The catalysed reaction is 1-(2-carboxyphenylamino)-1-deoxy-D-ribulose 5-phosphate + H(+) = (1S,2R)-1-C-(indol-3-yl)glycerol 3-phosphate + CO2 + H2O. The protein operates within amino-acid biosynthesis; L-tryptophan biosynthesis; L-tryptophan from chorismate: step 4/5. In Campylobacter curvus (strain 525.92), this protein is Indole-3-glycerol phosphate synthase.